The sequence spans 165 residues: Polcalcin Cup a 4 (165 aa).

EF-hand domains follow at residues 22-57 (QSVHELEEVFKKFDANGDGKISGSELADILRSMGSE), 58-86 (VDEAEVKAMMEEADTDGDGYVSLQEFVDL), 91-126 (ATVKDLKNAFKVFDRDCNGTISPAELCETLKSVGEP), and 127-162 (CTIEESKNIIHNVDKNGDGLINVEEFQTMMTSEMTD). Ca(2+) contacts are provided by Asp35, Asn37, Asp39, Lys41, Glu46, Asp71, Asp73, Asp75, Tyr77, Glu82, Asp104, Asp106, Asn108, Thr110, Glu115, Asp140, Asn142, Asp144, and Glu151.

In terms of assembly, may exist as monomer and dimer. Expressed in mature pollen grains.

This Hesperocyparis arizonica (Arizona cypress) protein is Polcalcin Cup a 4.